The primary structure comprises 322 residues: Acetyl-coenzyme A carboxylase carboxyl transferase subunit alpha (322 aa).

The CoA carboxyltransferase C-terminal domain occupies 30–293; the sequence is ALDISAEIAR…KQTLQESLRK (264 aa).

This sequence belongs to the AccA family. Acetyl-CoA carboxylase is a heterohexamer composed of biotin carboxyl carrier protein (AccB), biotin carboxylase (AccC) and two subunits each of ACCase subunit alpha (AccA) and ACCase subunit beta (AccD).

It localises to the cytoplasm. It catalyses the reaction N(6)-carboxybiotinyl-L-lysyl-[protein] + acetyl-CoA = N(6)-biotinyl-L-lysyl-[protein] + malonyl-CoA. Its pathway is lipid metabolism; malonyl-CoA biosynthesis; malonyl-CoA from acetyl-CoA: step 1/1. Functionally, component of the acetyl coenzyme A carboxylase (ACC) complex. First, biotin carboxylase catalyzes the carboxylation of biotin on its carrier protein (BCCP) and then the CO(2) group is transferred by the carboxyltransferase to acetyl-CoA to form malonyl-CoA. This is Acetyl-coenzyme A carboxylase carboxyl transferase subunit alpha from Nitrosomonas europaea (strain ATCC 19718 / CIP 103999 / KCTC 2705 / NBRC 14298).